The chain runs to 208 residues: Methylthioribulose-1-phosphate dehydratase (208 aa).

Zn(2+) contacts are provided by His-98 and His-100.

This sequence belongs to the aldolase class II family. MtnB subfamily. Zn(2+) is required as a cofactor.

The enzyme catalyses 5-(methylsulfanyl)-D-ribulose 1-phosphate = 5-methylsulfanyl-2,3-dioxopentyl phosphate + H2O. The protein operates within amino-acid biosynthesis; L-methionine biosynthesis via salvage pathway; L-methionine from S-methyl-5-thio-alpha-D-ribose 1-phosphate: step 2/6. Catalyzes the dehydration of methylthioribulose-1-phosphate (MTRu-1-P) into 2,3-diketo-5-methylthiopentyl-1-phosphate (DK-MTP-1-P). This is Methylthioribulose-1-phosphate dehydratase from Hahella chejuensis (strain KCTC 2396).